We begin with the raw amino-acid sequence, 1009 residues long: Mediator of RNA polymerase II transcription subunit 5 (1009 aa).

It belongs to the Mediator complex subunit 5 family. Component of the Mediator complex.

Its subcellular location is the nucleus. Functionally, component of the Mediator complex, a coactivator involved in the regulated transcription of nearly all RNA polymerase II-dependent genes. Mediator functions as a bridge to convey information from gene-specific regulatory proteins to the basal RNA polymerase II transcription machinery. Mediator is recruited to promoters by direct interactions with regulatory proteins and serves as a scaffold for the assembly of a functional preinitiation complex with RNA polymerase II and the general transcription factors. The chain is Mediator of RNA polymerase II transcription subunit 5 (nut1) from Neosartorya fischeri (strain ATCC 1020 / DSM 3700 / CBS 544.65 / FGSC A1164 / JCM 1740 / NRRL 181 / WB 181) (Aspergillus fischerianus).